The following is a 428-amino-acid chain: Keratin, type I cytoskeletal 18-A (428 aa).

Residues 2–78 form a head region; that stretch reads SFRSQTSSTT…SVKGSGLFNN (77 aa). The segment at 79 to 114 is coil 1A; it reads EKETMQILNDRLASYLETVRNLEQANSKLELQIRET. The IF rod domain occupies 79-390; it reads EKETMQILND…RLLDGEDFRL (312 aa). The linker 1 stretch occupies residues 115–131; it reads LEKRGPTTQDYSAYEKV. Residues 132–223 form a coil 1B region; the sequence is VEDLKSQIYD…RSHQTDVEEL (92 aa). A linker 12 region spans residues 224 to 247; sequence RKHISECGVQVDVDAPKGQDLSKI. The segment at 248-385 is coil 2; sequence MEEIRAQYET…IATYRRLLDG (138 aa). A tail region spans residues 386–428; sequence EDFRLQDALAVQTTKVQKKITVTETVVDGKVVSQSSEVQEIKK.

It belongs to the intermediate filament family. In terms of assembly, heterotetramer of two type I and two type II keratins. Keratin-18 associates with keratin-8. Phosphorylated. In terms of processing, proteolytically cleaved by caspases during epithelial cell apoptosis.

Functionally, when phosphorylated, plays a role in filament reorganization. This Polypterus senegalus (Senegal bichir) protein is Keratin, type I cytoskeletal 18-A.